The primary structure comprises 287 residues: tRNA uridine(34) hydroxylase (287 aa).

In terms of domain architecture, Rhodanese spans 132–226 (QGRPVVMLDT…YFEEVGGAHY (95 aa)). Residue Cys186 is the Cysteine persulfide intermediate of the active site.

Belongs to the TrhO family.

It carries out the reaction uridine(34) in tRNA + AH2 + O2 = 5-hydroxyuridine(34) in tRNA + A + H2O. Catalyzes oxygen-dependent 5-hydroxyuridine (ho5U) modification at position 34 in tRNAs. The chain is tRNA uridine(34) hydroxylase from Paraburkholderia phytofirmans (strain DSM 17436 / LMG 22146 / PsJN) (Burkholderia phytofirmans).